A 101-amino-acid chain; its full sequence is UPF0213 protein lp_2058 (101 aa).

The region spanning 15–92 (KKYYFYVLLC…KHQSRAAKLK (78 aa)) is the GIY-YIG domain.

Belongs to the UPF0213 family.

The protein is UPF0213 protein lp_2058 of Lactiplantibacillus plantarum (strain ATCC BAA-793 / NCIMB 8826 / WCFS1) (Lactobacillus plantarum).